Consider the following 585-residue polypeptide: MKEKKNIPTTQSLLSSFDGSRKVYEKGSRPDILVPKREIALTQTVTQAGMIQNEPIRVYDTSGPYTDEHAHIDVTKGLNRLRAAWVEERGDTESYEGRHVKPEDNGYRSRNGSHQHIHTDFHHKPLRAKQGACVTQMHYAKKGIVTPEMEFIALREGLSPEFVREEVASGRAVIPANINHPESEPMIIGRNFHVKINANIGNSAVTSSIDEEVEKMTWAIRWGTDTMMDLSTGKDIHTTREWIIRNCPVPVGTVPIYQALEKVNGVAEDLTWDVYRDTLIEQAEQGVDYFTIHAGVRLRYIPLTVDRVTGIVSRGGAIMARWCLAHHQENFLYTHFEDICEIMKTYDIAFSLGDGLRPGSIADANDEAQFAELETLGELTEIAWKHDVQVMIEGPGHVPMDKIKENVDKQMEICKEAPFYTLGPLTTDIAPGYDHITSAIGAAMIGWYGTAMLCYVTPKEHLGLPNKEDVREGVIAYKIAAHAADLAKGHPAAQKRDDALSKARFEFRWRDQFNLSLDPERAMAFHDETLPAEGAKTAHFCSMCGPKFCSMKISHDIRNQSEEVKKEMEKKAKEFISGGSQIYSS.

The segment covering 89-107 has biased composition (basic and acidic residues); it reads RGDTESYEGRHVKPEDNGY. Residues 89–116 are disordered; it reads RGDTESYEGRHVKPEDNGYRSRNGSHQH. Substrate is bound by residues asparagine 199, methionine 228, tyrosine 257, histidine 293, 313 to 315, 354 to 357, and glutamate 393; these read SRG and DGLR. Histidine 397 is a Zn(2+) binding site. Tyrosine 420 serves as a coordination point for substrate. Histidine 461 serves as a coordination point for Zn(2+). Residues cysteine 541, cysteine 544, and cysteine 549 each contribute to the [4Fe-4S] cluster site.

It belongs to the ThiC family. [4Fe-4S] cluster is required as a cofactor.

The catalysed reaction is 5-amino-1-(5-phospho-beta-D-ribosyl)imidazole + S-adenosyl-L-methionine = 4-amino-2-methyl-5-(phosphooxymethyl)pyrimidine + CO + 5'-deoxyadenosine + formate + L-methionine + 3 H(+). It participates in cofactor biosynthesis; thiamine diphosphate biosynthesis. In terms of biological role, catalyzes the synthesis of the hydroxymethylpyrimidine phosphate (HMP-P) moiety of thiamine from aminoimidazole ribotide (AIR) in a radical S-adenosyl-L-methionine (SAM)-dependent reaction. In Bacillus pumilus (strain SAFR-032), this protein is Phosphomethylpyrimidine synthase.